The chain runs to 372 residues: MSPVFLPSGETYDQEHLDDNRVLGYNPLVPAALVQQEIPVSETSRKVITDSRKEIQAILNKQDDRIIVVVGPCSIHDPKLAMDYAKLLKPKADELQDALCVVMRCYLEKPRTTIGWKGLVNDPNLDGSFAINKGIRMARQMYCDVTNFGIPLASEMLDNISPQFFADLLSFGAIGARTTESQLHRELASALSFPVGFKNGTDGTVGVAIDAIGATAHPHTMLGVTKQGLAAITMTRGNKDTFIILRGGKKGPNYDAEHVAAVRKDLEKANLPPRIMIDCSHGNSSKNHLNQPKVSKSIAEQIRNGDSSIVGVMIESHINEGRQDAPIRPGVKDTLKYGVSITDACVSWEQTAPMLDDLAEAVRARRQNQKSN.

This sequence belongs to the class-I DAHP synthase family.

Its subcellular location is the cytoplasm. It localises to the nucleus. The enzyme catalyses D-erythrose 4-phosphate + phosphoenolpyruvate + H2O = 7-phospho-2-dehydro-3-deoxy-D-arabino-heptonate + phosphate. It functions in the pathway metabolic intermediate biosynthesis; chorismate biosynthesis; chorismate from D-erythrose 4-phosphate and phosphoenolpyruvate: step 1/7. Stereospecific condensation of phosphoenolpyruvate (PEP) and D-erythrose-4-phosphate (E4P) giving rise to 3-deoxy-D-arabino-heptulosonate-7-phosphate (DAHP). This is Phospho-2-dehydro-3-deoxyheptonate aldolase, tyrosine-inhibited (aro4) from Schizosaccharomyces pombe (strain 972 / ATCC 24843) (Fission yeast).